Consider the following 52-residue polypeptide: Ribosome biogenesis protein Nop10 (52 aa).

The protein belongs to the NOP10 family.

Its function is as follows. Involved in ribosome biogenesis; more specifically in 18S rRNA pseudouridylation and in cleavage of pre-rRNA. This chain is Ribosome biogenesis protein Nop10, found in Methanococcus vannielii (strain ATCC 35089 / DSM 1224 / JCM 13029 / OCM 148 / SB).